A 426-amino-acid polypeptide reads, in one-letter code: MLDSKLVRTQLQEIVGRLATRGFQLDVARFESLEAQRKAVQTRTEQLQAERNARSKTIGQAKSRGEDIAPLLAEVDRMGSDLEAGKRELDAIQAELDALMLSIPNLPHESVPVGADEEDNVEVRRWGVPRTFDFAIKDHVALGERHGWLDFETAAKLSGARFALMRGPIARLHRALAQFMLDLHTGEHGYEEAYTPYLVQAPALQGTGQLPKFEEDLFKISREGEADFYLIPTAEVSLTNIVAGEILDARQLPLKFVAHTPCFRSEAGASGRDTRGMIRQHQFDKVEMVRIVDPAKSYEALEELTANAEKVLQRLELPYRVLALCTGDMGFSATKTYDLEVWVPSQDKYREISSCSNCGDFQARRMQARWRNPETGKPELVHTLNGSGLAVGRTLVAVLENYQQADGSIRVPEVLKPYMGGIEVIG.

Position 233–235 (threonine 233–glutamate 235) interacts with L-serine. Arginine 264–glutamate 266 is an ATP binding site. Glutamate 287 contributes to the L-serine binding site. An ATP-binding site is contributed by glutamate 351–serine 354. Serine 387 serves as a coordination point for L-serine.

This sequence belongs to the class-II aminoacyl-tRNA synthetase family. Type-1 seryl-tRNA synthetase subfamily. In terms of assembly, homodimer. The tRNA molecule binds across the dimer.

It localises to the cytoplasm. It catalyses the reaction tRNA(Ser) + L-serine + ATP = L-seryl-tRNA(Ser) + AMP + diphosphate + H(+). The catalysed reaction is tRNA(Sec) + L-serine + ATP = L-seryl-tRNA(Sec) + AMP + diphosphate + H(+). Its pathway is aminoacyl-tRNA biosynthesis; selenocysteinyl-tRNA(Sec) biosynthesis; L-seryl-tRNA(Sec) from L-serine and tRNA(Sec): step 1/1. Its function is as follows. Catalyzes the attachment of serine to tRNA(Ser). Is also able to aminoacylate tRNA(Sec) with serine, to form the misacylated tRNA L-seryl-tRNA(Sec), which will be further converted into selenocysteinyl-tRNA(Sec). This chain is Serine--tRNA ligase, found in Azotobacter vinelandii (strain DJ / ATCC BAA-1303).